We begin with the raw amino-acid sequence, 417 residues long: Serine hydroxymethyltransferase (417 aa).

(6S)-5,6,7,8-tetrahydrofolate contacts are provided by residues Leu121 and 125 to 127; that span reads GHL. Residue Lys229 is modified to N6-(pyridoxal phosphate)lysine. 355–357 provides a ligand contact to (6S)-5,6,7,8-tetrahydrofolate; it reads SPF.

The protein belongs to the SHMT family. In terms of assembly, homodimer. Pyridoxal 5'-phosphate is required as a cofactor.

The protein localises to the cytoplasm. It catalyses the reaction (6R)-5,10-methylene-5,6,7,8-tetrahydrofolate + glycine + H2O = (6S)-5,6,7,8-tetrahydrofolate + L-serine. Its pathway is one-carbon metabolism; tetrahydrofolate interconversion. It functions in the pathway amino-acid biosynthesis; glycine biosynthesis; glycine from L-serine: step 1/1. Catalyzes the reversible interconversion of serine and glycine with tetrahydrofolate (THF) serving as the one-carbon carrier. This reaction serves as the major source of one-carbon groups required for the biosynthesis of purines, thymidylate, methionine, and other important biomolecules. Also exhibits THF-independent aldolase activity toward beta-hydroxyamino acids, producing glycine and aldehydes, via a retro-aldol mechanism. This is Serine hydroxymethyltransferase from Klebsiella pneumoniae subsp. pneumoniae (strain ATCC 700721 / MGH 78578).